Reading from the N-terminus, the 350-residue chain is Mitochondrial glycine transporter (350 aa).

Solcar repeat units follow at residues 23–107 (SKPK…LRQC), 134–218 (LSHT…SKKN), and 250–334 (SSIS…LILK). 6 consecutive transmembrane segments (helical) span residues 29–54 (FIAGLASGLSSAILLQPADLLKTRIQ), 82–108 (GTLPSALRTGFGSALYFSSLNALRQCI), 140–165 (LLTGAMARTAAGFIMMPVTVIKVRYE), 193–216 (GFGATAIRDAPYAGLYVVFYEQSK), 254–280 (VNFVSGALAAGLATSITNPFDVVKTRL), and 309–327 (GLGLRMGRKAISSALAWTV).

This sequence belongs to the mitochondrial carrier (TC 2.A.29) family. SLC25A38 subfamily.

It is found in the mitochondrion inner membrane. It carries out the reaction glycine(in) = glycine(out). Mitochondrial glycine transporter that imports glycine into the mitochondrial matrix. Plays an important role in providing glycine for the first enzymatic step in heme biosynthesis, the condensation of glycine with succinyl-CoA to produce 5-aminolevulinate (ALA) in the mitochondrial matrix. The protein is Mitochondrial glycine transporter of Ajellomyces capsulatus (strain NAm1 / WU24) (Darling's disease fungus).